The sequence spans 377 residues: NADH dehydrogenase [ubiquinone] 1 alpha subcomplex subunit 9, mitochondrial (377 aa).

The N-terminal 35 residues, 1 to 35 (MAAAVRFQVVRALPMSRPAISAAATSVFCSSSHRQ), are a transit peptide targeting the mitochondrion. The residue at position 175 (lysine 175) is an N6-succinyllysine. N6-acetyllysine occurs at positions 189 and 370.

The protein belongs to the complex I NDUFA9 subunit family. As to quaternary structure, complex I is composed of 45 different subunits. This a component of the hydrophobic protein fraction. Interacts with BLOC1S1. Interacts with SLC2A4. Interacts with CLOCK. Interacts with RAB5IF. FAD is required as a cofactor. Post-translationally, acetylated on lysine residues. BLOC1S1 is required for acetylation. Acetylated by CLOCK in a circadian manner. Expressed by the principal cells of the epididymis. Detected in flagella of epididymal sperm (at protein level).

The protein localises to the mitochondrion matrix. Functionally, accessory subunit of the mitochondrial membrane respiratory chain NADH dehydrogenase (Complex I), that is believed not to be involved in catalysis. Complex I functions in the transfer of electrons from NADH to the respiratory chain. The immediate electron acceptor for the enzyme is believed to be ubiquinone. This Rattus norvegicus (Rat) protein is NADH dehydrogenase [ubiquinone] 1 alpha subcomplex subunit 9, mitochondrial.